Consider the following 291-residue polypeptide: Nucleotide-binding protein CMM_1747 (291 aa).

15–22 (GMSGAGRS) is a binding site for ATP. GTP is bound at residue 66 to 69 (DVRG).

It belongs to the RapZ-like family.

In terms of biological role, displays ATPase and GTPase activities. This chain is Nucleotide-binding protein CMM_1747, found in Clavibacter michiganensis subsp. michiganensis (strain NCPPB 382).